The following is a 155-amino-acid chain: Ribosomal RNA large subunit methyltransferase H (155 aa).

Residues Leu-73, Gly-104, and 123-128 (LSPLTL) each bind S-adenosyl-L-methionine.

This sequence belongs to the RNA methyltransferase RlmH family. In terms of assembly, homodimer.

The protein resides in the cytoplasm. It catalyses the reaction pseudouridine(1915) in 23S rRNA + S-adenosyl-L-methionine = N(3)-methylpseudouridine(1915) in 23S rRNA + S-adenosyl-L-homocysteine + H(+). In terms of biological role, specifically methylates the pseudouridine at position 1915 (m3Psi1915) in 23S rRNA. This Pseudomonas syringae pv. tomato (strain ATCC BAA-871 / DC3000) protein is Ribosomal RNA large subunit methyltransferase H.